The sequence spans 248 residues: Triosephosphate isomerase (248 aa).

Residues N12 and K14 each contribute to the substrate site. The segment at 16 to 30 is igE-binding; it reads NGDRAGIDSIISFMK. The Electrophile role is filled by H95. E165 functions as the Proton acceptor in the catalytic mechanism. IgE-binding stretches follow at residues 166-180 and 205-219; these read PVWAIGTGKTATPEQ and RIIYGGSVTPGNCKE.

It belongs to the triosephosphate isomerase family. Homodimer. In terms of tissue distribution, expressed in skeletal muscle (at protein level).

Its subcellular location is the cytoplasm. It catalyses the reaction D-glyceraldehyde 3-phosphate = dihydroxyacetone phosphate. The catalysed reaction is dihydroxyacetone phosphate = methylglyoxal + phosphate. It participates in carbohydrate biosynthesis; gluconeogenesis. The protein operates within carbohydrate degradation; glycolysis; D-glyceraldehyde 3-phosphate from glycerone phosphate: step 1/1. Triosephosphate isomerase is an extremely efficient metabolic enzyme that catalyzes the interconversion between dihydroxyacetone phosphate (DHAP) and D-glyceraldehyde-3-phosphate (G3P) in glycolysis and gluconeogenesis. Its function is as follows. It is also responsible for the non-negligible production of methylglyoxal a reactive cytotoxic side-product that modifies and can alter proteins, DNA and lipids. This is Triosephosphate isomerase from Procambarus clarkii (Red swamp crayfish).